We begin with the raw amino-acid sequence, 363 residues long: Phosphoserine aminotransferase (363 aa).

L-glutamate is bound at residue Arg42. Residues 76 to 77 (GR), Trp102, Thr156, Asp175, and Gln198 each bind pyridoxal 5'-phosphate. At Lys199 the chain carries N6-(pyridoxal phosphate)lysine. 240 to 241 (NT) contacts pyridoxal 5'-phosphate.

Belongs to the class-V pyridoxal-phosphate-dependent aminotransferase family. SerC subfamily. In terms of assembly, homodimer. The cofactor is pyridoxal 5'-phosphate.

The protein localises to the cytoplasm. The catalysed reaction is O-phospho-L-serine + 2-oxoglutarate = 3-phosphooxypyruvate + L-glutamate. It catalyses the reaction 4-(phosphooxy)-L-threonine + 2-oxoglutarate = (R)-3-hydroxy-2-oxo-4-phosphooxybutanoate + L-glutamate. The protein operates within amino-acid biosynthesis; L-serine biosynthesis; L-serine from 3-phospho-D-glycerate: step 2/3. Its pathway is cofactor biosynthesis; pyridoxine 5'-phosphate biosynthesis; pyridoxine 5'-phosphate from D-erythrose 4-phosphate: step 3/5. Catalyzes the reversible conversion of 3-phosphohydroxypyruvate to phosphoserine and of 3-hydroxy-2-oxo-4-phosphonooxybutanoate to phosphohydroxythreonine. This Shewanella denitrificans (strain OS217 / ATCC BAA-1090 / DSM 15013) protein is Phosphoserine aminotransferase.